The primary structure comprises 46 residues: Protein PsbN (46 aa).

The chain crosses the membrane as a helical span at residues 10–30 (LAIIVLVVLLGLTGLGVYMAF).

This sequence belongs to the PsbN family.

It is found in the cellular thylakoid membrane. Its function is as follows. May play a role in photosystem I and II biogenesis. The sequence is that of Protein PsbN from Prochlorococcus marinus (strain MIT 9211).